Here is a 2219-residue protein sequence, read N- to C-terminus: RNA-directed RNA polymerase L (2219 aa).

The endonuclease stretch occupies residues 26–289 (KLAFLVQTEP…TTEDDVEYLI (264 aa)). The Mn(2+) site is built by Glu51, Asp89, and Glu102. The active site involves Lys115. In terms of domain architecture, RdRp catalytic spans 1177–1373 (LSMKLNVSLA…YMSDQLNKFV (197 aa)). Asp1335 is a Mg(2+) binding site.

Belongs to the Bunyavirales RNA polymerase family. Homomultimer; the oligomeric structure is essential for the polymerase activity. Interacts with nucleoprotein N. Interacts with protein Z; this interaction inhibits viral transcription and replication, Z partially blocks the product exit tunnel for the releasing nascent RNA product. Mn(2+) serves as cofactor. It depends on Mg(2+) as a cofactor.

Its subcellular location is the virion. The protein localises to the host cytoplasm. The catalysed reaction is RNA(n) + a ribonucleoside 5'-triphosphate = RNA(n+1) + diphosphate. Its function is as follows. RNA-dependent RNA polymerase, which is responsible for the replication and transcription of the viral RNA genome using antigenomic RNA as an intermediate. During transcription, synthesizes subgenomic RNAs and assures their capping by a cap-snatching mechanism, which involves the endonuclease activity cleaving the host capped pre-mRNAs. These short capped RNAs are then used as primers for viral transcription. The 3'-end of subgenomic mRNAs molecules are heterogeneous and not polyadenylated. The replicase function is to direct synthesis of antigenomic and genomic RNA which are encapsidated and non capped. As a consequence of the use of the same enzyme for both transcription and replication, these mechanisms need to be well coordinated. These processes may be regulated by proteins N and Z in a dose-dependent manner. Z protein inhibits the viral polymerase L und thus the viral transcription and RNA synthesis. The sequence is that of RNA-directed RNA polymerase L from Homo sapiens (Human).